We begin with the raw amino-acid sequence, 176 residues long: Protein singles bar (176 aa).

4 helical membrane-spanning segments follow: residues L13–I35, F71–F91, L111–L131, and G140–L160. Positions F30–R173 constitute an MARVEL domain.

It is found in the membrane. Functionally, essential for myoblast fusion in developing embryos and pupae, and consequently is essential for muscle formation in adults. Required for progression past the pre-fusion complex stage of myoblast fusion. The chain is Protein singles bar from Drosophila melanogaster (Fruit fly).